We begin with the raw amino-acid sequence, 424 residues long: Serine hydroxymethyltransferase 2 (424 aa).

(6S)-5,6,7,8-tetrahydrofolate is bound by residues leucine 125 and 129-131; that span reads GHL. Position 234 is an N6-(pyridoxal phosphate)lysine (lysine 234). Residue glutamate 250 participates in (6S)-5,6,7,8-tetrahydrofolate binding.

It belongs to the SHMT family. In terms of assembly, homodimer. The cofactor is pyridoxal 5'-phosphate.

It is found in the cytoplasm. The catalysed reaction is (6R)-5,10-methylene-5,6,7,8-tetrahydrofolate + glycine + H2O = (6S)-5,6,7,8-tetrahydrofolate + L-serine. It participates in one-carbon metabolism; tetrahydrofolate interconversion. The protein operates within amino-acid biosynthesis; glycine biosynthesis; glycine from L-serine: step 1/1. Its function is as follows. Catalyzes the reversible interconversion of serine and glycine with tetrahydrofolate (THF) serving as the one-carbon carrier. This reaction serves as the major source of one-carbon groups required for the biosynthesis of purines, thymidylate, methionine, and other important biomolecules. Also exhibits THF-independent aldolase activity toward beta-hydroxyamino acids, producing glycine and aldehydes, via a retro-aldol mechanism. The chain is Serine hydroxymethyltransferase 2 from Cupriavidus pinatubonensis (strain JMP 134 / LMG 1197) (Cupriavidus necator (strain JMP 134)).